Here is a 350-residue protein sequence, read N- to C-terminus: Protein-glutamate methylesterase/protein-glutamine glutaminase (350 aa).

A Response regulatory domain is found at 5–122 (KVLCVDDSAL…RDGLIEYSEV (118 aa)). Asp-56 bears the 4-aspartylphosphate mark. The CheB-type methylesterase domain maps to 152-346 (PFASSEKLVI…ERILTRLGDR (195 aa)). Catalysis depends on residues Ser-165, His-191, and Asp-288.

It belongs to the CheB family. Phosphorylated by CheA. Phosphorylation of the N-terminal regulatory domain activates the methylesterase activity.

Its subcellular location is the cytoplasm. It catalyses the reaction [protein]-L-glutamate 5-O-methyl ester + H2O = L-glutamyl-[protein] + methanol + H(+). The enzyme catalyses L-glutaminyl-[protein] + H2O = L-glutamyl-[protein] + NH4(+). In terms of biological role, involved in chemotaxis. Part of a chemotaxis signal transduction system that modulates chemotaxis in response to various stimuli. Catalyzes the demethylation of specific methylglutamate residues introduced into the chemoreceptors (methyl-accepting chemotaxis proteins or MCP) by CheR. Also mediates the irreversible deamidation of specific glutamine residues to glutamic acid. The polypeptide is Protein-glutamate methylesterase/protein-glutamine glutaminase (Bordetella pertussis (strain Tohama I / ATCC BAA-589 / NCTC 13251)).